The primary structure comprises 159 residues: MNKQISKKPAQRTIALNKKALHDYYVEQRFEAGLVLEGWEVKSIRAGRVQLRDSYVVFKSGEAWLIGAHLSPLPNVAEYMKADPQSSRKLLLNKREIGKLFGAVQKQGLTVVPLDLHWHKNHVKVEIALAKGKKTHDKRETIKRREWEREKHRVLKSHG.

This sequence belongs to the SmpB family.

The protein localises to the cytoplasm. Functionally, required for rescue of stalled ribosomes mediated by trans-translation. Binds to transfer-messenger RNA (tmRNA), required for stable association of tmRNA with ribosomes. tmRNA and SmpB together mimic tRNA shape, replacing the anticodon stem-loop with SmpB. tmRNA is encoded by the ssrA gene; the 2 termini fold to resemble tRNA(Ala) and it encodes a 'tag peptide', a short internal open reading frame. During trans-translation Ala-aminoacylated tmRNA acts like a tRNA, entering the A-site of stalled ribosomes, displacing the stalled mRNA. The ribosome then switches to translate the ORF on the tmRNA; the nascent peptide is terminated with the 'tag peptide' encoded by the tmRNA and targeted for degradation. The ribosome is freed to recommence translation, which seems to be the essential function of trans-translation. This chain is SsrA-binding protein, found in Coxiella burnetii (strain CbuK_Q154) (Coxiella burnetii (strain Q154)).